Reading from the N-terminus, the 364-residue chain is DNA replication and repair protein RecF (364 aa).

30–37 (GNNGQGKT) serves as a coordination point for ATP.

The protein belongs to the RecF family.

Its subcellular location is the cytoplasm. Functionally, the RecF protein is involved in DNA metabolism; it is required for DNA replication and normal SOS inducibility. RecF binds preferentially to single-stranded, linear DNA. It also seems to bind ATP. This chain is DNA replication and repair protein RecF, found in Citrifermentans bemidjiense (strain ATCC BAA-1014 / DSM 16622 / JCM 12645 / Bem) (Geobacter bemidjiensis).